The following is a 1474-amino-acid chain: MARLAAVLWNLCVTAVLVTSATQGLSRAGLPFGLMRRELACEGYPIELRCPGSDVIMVENANYGRTDDKICDADPFQMENVQCYLPDAFKIMSQRCNNRTQCVVVAGSDAFPDPCPGTYKYLEVQYDCVPYKVEQKVFVCPGTLQKVLEPTSTHESEHQSGAWCKDPLQAGDRIYVMPWIPYRTDTLTEYASWEDYVAARHTTTYRLPNRVDGTGFVVYDGAVFYNKERTRNIVKYDLRTRIKSGETVINTANYHDTSPYRWGGKTDIDLAVDENGLWVIYATEGNNGRLVVSQLNPYTLRFEGTWETGYDKRSASNAFMVCGVLYVLRSVYVDDDSEAAGNRVDYAFNTNANREEPVSLTFPNPYQFISSVDYNPRDNQLYVWNNYFVVRYSLEFGPPDPSAGPATSPPLSTTTTARPTPLTSTASPAATTPLRRAPLTTHPVGAINQLGPDLPPATAPVPSTRRPPAPNLHVSPELFCEPREVRRVQWPATQQGMLVERPCPKGTRGIASFQCLPALGLWNPRGPDLSNCTSPWVNQVAQKIKSGENAANIASELARHTRGSIYAGDVSSSVKLMEQLLDILDAQLQALRPIERESAGKNYNKMHKRERTCKDYIKAVVETVDNLLRPEALESWKDMNATEQVHTATMLLDVLEEGAFLLADNVREPARFLAAKENVVLEVTVLNTEGQVQELVFPQEEYPRKNSIQLSAKTIKQNSRNGVVKVVFILYNNLGLFLSTENATVKLAGEAGPGGPGGASLVVNSQVIAASINKESSRVFLMDPVIFTVAHLEDKNHFNANCSFWNYSERSMLGYWSTQGCRLVESNKTHTTCACSHLTNFAVLMAHREIYQGRINELLLSVITWVGIVISLVCLAICISTFCFLRGLQTDRNTIHKNLCINLFLAELLFLVGIDKTQYEIACPIFAGLLHYFFLAAFSWLCLEGVHLYLLLVEVFESEYSRTKYYYLGGYCFPALVVGIAAAIDYRSYGTEKACWLRVDNYFIWSFIGPVSFVIVVNLVFLMVTLHKMIRSSSVLKPDSSRLDNIKSWALGAIALLFLLGLTWAFGLLFINKESVVMAYLFTTFNAFQGVFIFVFHCALQKKVHKEYSKCLRHSYCCIRSPPGGTHGSLKTSAMRSNTRYYTGTQSRIRRMWNDTVRKQTESSFMAGDINSTPTLNRGTMGNHLLTNPVLQPRGGTSPYNTLIAESVGFNPSSPPVFNSPGSYREPKHPLGGREACGMDTLPLNGNFNNSYSLRSGDFPPGDGGPEPPRGRNLADAAAFEKMIISELVHNNLRGSSSAAKGPPPPEPPVPPVPGGGGEEEAGGPGGADRAEIELLYKALEEPLLLPRAQSVLYQSDLDESESCTAEDGATSRPLSSPPGRDSLYASGANLRDSPSYPDSSPEGPSEALPPPPPAPPGPPEIYYTSRPPALVARNPLQGYYQVRRPSHEGYLAAPGLEGPGPDGDGQMQLVTSL.

Positions 1–24 (MARLAAVLWNLCVTAVLVTSATQG) are cleaved as a signal peptide. The Extracellular segment spans residues 25–858 (LSRAGLPFGL…EIYQGRINEL (834 aa)). Positions 40-129 (ACEGYPIELR…KYLEVQYDCV (90 aa)) constitute an SUEL-type lectin domain. 5 disulfides stabilise this stretch: C41/C71, C50/C128, C83/C115, C96/C102, and C140/C322. Alpha-L-rhamnose is bound at residue E42. Residue N98 is glycosylated (N-linked (GlcNAc...) asparagine). Position 117 to 120 (117 to 120 (GTYK)) interacts with alpha-L-rhamnose. The region spanning 139–398 (VCPGTLQKVL…VVRYSLEFGP (260 aa)) is the Olfactomedin-like domain. Residues 400–434 (DPSAGPATSPPLSTTTTARPTPLTSTASPAATTPL) are disordered. Low complexity predominate over residues 405–434 (PATSPPLSTTTTARPTPLTSTASPAATTPL). Intrachain disulfides connect C480–C515 and C503–C532. 6 N-linked (GlcNAc...) asparagine glycosylation sites follow: N531, N640, N742, N801, N806, and N827. The GAIN-B domain maps to 669 to 851 (PARFLAAKEN…AVLMAHREIY (183 aa)). 2 disulfide bridges follow: C802–C833 and C821–C835. Residues 802-851 (CSFWNYSERSMLGYWSTQGCRLVESNKTHTTCACSHLTNFAVLMAHREIY) are GPS. The helical transmembrane segment at 859-879 (LLSVITWVGIVISLVCLAICI) threads the bilayer. Topologically, residues 880 to 893 (STFCFLRGLQTDRN) are cytoplasmic. The helical transmembrane segment at 894–914 (TIHKNLCINLFLAELLFLVGI) threads the bilayer. Residues 915–920 (DKTQYE) are Extracellular-facing. Residues 921 to 941 (IACPIFAGLLHYFFLAAFSWL) traverse the membrane as a helical segment. Residues 942 to 964 (CLEGVHLYLLLVEVFESEYSRTK) are Cytoplasmic-facing. The helical transmembrane segment at 965 to 985 (YYYLGGYCFPALVVGIAAAID) threads the bilayer. Over 986–1002 (YRSYGTEKACWLRVDNY) the chain is Extracellular. Residues 1003–1023 (FIWSFIGPVSFVIVVNLVFLM) form a helical membrane-spanning segment. The Cytoplasmic portion of the chain corresponds to 1024 to 1050 (VTLHKMIRSSSVLKPDSSRLDNIKSWA). The helical transmembrane segment at 1051 to 1071 (LGAIALLFLLGLTWAFGLLFI) threads the bilayer. The Extracellular segment spans residues 1072–1075 (NKES). The helical transmembrane segment at 1076 to 1096 (VVMAYLFTTFNAFQGVFIFVF) threads the bilayer. Topologically, residues 1097–1474 (HCALQKKVHK…DGQMQLVTSL (378 aa)) are cytoplasmic. Residue R1194 is modified to Omega-N-methylarginine. Phosphoserine is present on S1220. Disordered regions lie at residues 1248–1273 (FNNSYSLRSGDFPPGDGGPEPPRGRN), 1294–1328 (RGSSSAAKGPPPPEPPVPPVPGGGGEEEAGGPGGA), 1360–1429 (ESES…SRPP), and 1451–1474 (YLAAPGLEGPGPDGDGQMQLVTSL). Pro residues-rich tracts occupy residues 1302–1314 (GPPPPEPPVPPVP) and 1408–1420 (ALPPPPPAPPGPP). S1473 is subject to Phosphoserine.

The protein belongs to the G-protein coupled receptor 2 family. Adhesion G-protein coupled receptor (ADGR) subfamily. In terms of assembly, forms a heterodimer, consisting of a large extracellular region (p120) non-covalently linked to a seven-transmembrane moiety (p85). Interacts with syntaxin and with proteins of the SHANK family via the PDZ domain. Interacts (via extracellular domain) with FLRT1, FLRT2 and FLRT3 (via extracellular domain). Post-translationally, autoproteolytically cleaved into 2 subunits, an extracellular subunit and a seven-transmembrane subunit. This proteolytic processing takes place early in the biosynthetic pathway, either in the endoplasmic reticulum or in the early compartment of the Golgi apparatus.

Its subcellular location is the cell membrane. The protein resides in the cell projection. The protein localises to the axon. It localises to the growth cone. It is found in the synapse. Its subcellular location is the presynaptic cell membrane. The protein resides in the synaptosome. Calcium-independent receptor of high affinity for alpha-latrotoxin, an excitatory neurotoxin present in black widow spider venom which triggers massive exocytosis from neurons and neuroendocrine cells. Receptor for TENM2 that mediates heterophilic synaptic cell-cell contact and postsynaptic specialization. Receptor probably implicated in the regulation of exocytosis. The polypeptide is Adhesion G protein-coupled receptor L1 (Homo sapiens (Human)).